The following is an 83-amino-acid chain: Neurotoxin LmNaTx3 (83 aa).

A signal peptide spans 1 to 21 (MQLKIQLLMLVLMIVLTDVYS). The LCN-type CS-alpha/beta domain maps to 22-83 (KDGFIVSKKN…NIAMKNKNYC (62 aa)). Disulfide bonds link C32/C83, C36/C59, C45/C64, and C49/C66.

It belongs to the long (4 C-C) scorpion toxin superfamily. Sodium channel inhibitor family. Alpha subfamily. Expressed by the venom gland.

The protein localises to the secreted. Its function is as follows. Binds voltage-independently at site-3 of voltage-gated sodium channels (Nav) and inhibits the inactivation of the activated channels, thereby blocking neuronal transmission. This Lychas mucronatus (Chinese swimming scorpion) protein is Neurotoxin LmNaTx3.